The chain runs to 537 residues: CTP synthase (537 aa).

The amidoligase domain stretch occupies residues 1-267 (MTNTKFVFVT…ISVLEERLFG (267 aa)). Ser-15 contacts CTP. Residue Ser-15 participates in UTP binding. 16 to 21 (SVGKGI) contacts ATP. Residue Tyr-56 participates in L-glutamine binding. ATP is bound at residue Asp-73. The Mg(2+) site is built by Asp-73 and Glu-141. CTP is bound by residues 148-150 (DIE), 188-193 (KTKPTQ), and Lys-224. Residues 188–193 (KTKPTQ) and Lys-224 each bind UTP. The region spanning 297-535 (YVVLPDAYLS…LSEAVAKASP (239 aa)) is the Glutamine amidotransferase type-1 domain. Position 355 (Gly-355) interacts with L-glutamine. Residue Cys-382 is the Nucleophile; for glutamine hydrolysis of the active site. L-glutamine-binding positions include 383–386 (LGMQ), Glu-406, and Arg-463. Active-site residues include His-508 and Glu-510.

This sequence belongs to the CTP synthase family. In terms of assembly, homotetramer.

The catalysed reaction is UTP + L-glutamine + ATP + H2O = CTP + L-glutamate + ADP + phosphate + 2 H(+). It catalyses the reaction L-glutamine + H2O = L-glutamate + NH4(+). It carries out the reaction UTP + NH4(+) + ATP = CTP + ADP + phosphate + 2 H(+). It participates in pyrimidine metabolism; CTP biosynthesis via de novo pathway; CTP from UDP: step 2/2. With respect to regulation, allosterically activated by GTP, when glutamine is the substrate; GTP has no effect on the reaction when ammonia is the substrate. The allosteric effector GTP functions by stabilizing the protein conformation that binds the tetrahedral intermediate(s) formed during glutamine hydrolysis. Inhibited by the product CTP, via allosteric rather than competitive inhibition. In terms of biological role, catalyzes the ATP-dependent amination of UTP to CTP with either L-glutamine or ammonia as the source of nitrogen. Regulates intracellular CTP levels through interactions with the four ribonucleotide triphosphates. The sequence is that of CTP synthase from Coprothermobacter proteolyticus (strain ATCC 35245 / DSM 5265 / OCM 4 / BT).